A 500-amino-acid chain; its full sequence is ATP synthase subunit beta (500 aa).

155-162 provides a ligand contact to ATP; sequence GGAGVGKT.

This sequence belongs to the ATPase alpha/beta chains family. As to quaternary structure, F-type ATPases have 2 components, CF(1) - the catalytic core - and CF(0) - the membrane proton channel. CF(1) has five subunits: alpha(3), beta(3), gamma(1), delta(1), epsilon(1). CF(0) has three main subunits: a(1), b(2) and c(9-12). The alpha and beta chains form an alternating ring which encloses part of the gamma chain. CF(1) is attached to CF(0) by a central stalk formed by the gamma and epsilon chains, while a peripheral stalk is formed by the delta and b chains.

Its subcellular location is the cell inner membrane. The catalysed reaction is ATP + H2O + 4 H(+)(in) = ADP + phosphate + 5 H(+)(out). In terms of biological role, produces ATP from ADP in the presence of a proton gradient across the membrane. The catalytic sites are hosted primarily by the beta subunits. The chain is ATP synthase subunit beta from Azobacteroides pseudotrichonymphae genomovar. CFP2.